Here is a 277-residue protein sequence, read N- to C-terminus: Inositol monophosphatase 1 (277 aa).

Residues Glu-70, Asp-90, Ile-92, and Asp-93 each contribute to the Mg(2+) site. Residues Glu-70, 90–95 (DPIDGT), 194–196 (GTA), Glu-213, and Asp-220 each bind substrate. Position 220 (Asp-220) interacts with Mg(2+).

It belongs to the inositol monophosphatase superfamily. As to quaternary structure, homodimer. Mg(2+) serves as cofactor. As to expression, mostly expressed in brain, small intestine, testis, kidney, and spleen (at protein level).

Its subcellular location is the cytoplasm. The enzyme catalyses a myo-inositol phosphate + H2O = myo-inositol + phosphate. It catalyses the reaction 1D-myo-inositol 1-phosphate + H2O = myo-inositol + phosphate. The catalysed reaction is 1D-myo-inositol 2-phosphate + H2O = myo-inositol + phosphate. It carries out the reaction 1D-myo-inositol 3-phosphate + H2O = myo-inositol + phosphate. The enzyme catalyses 1D-myo-inositol 4-phosphate + H2O = myo-inositol + phosphate. It catalyses the reaction 1D-myo-inositol 5-phosphate + H2O = myo-inositol + phosphate. The catalysed reaction is 1D-myo-inositol 6-phosphate + H2O = myo-inositol + phosphate. It carries out the reaction scyllo-inositol 1-phosphate + H2O = scyllo-inositol + phosphate. The enzyme catalyses alpha-D-galactose 1-phosphate + H2O = D-galactose + phosphate. It catalyses the reaction alpha-D-glucose 1-phosphate + H2O = D-glucose + phosphate. The catalysed reaction is D-glucose 6-phosphate + H2O = D-glucose + phosphate. It carries out the reaction beta-D-fructose 1-phosphate + H2O = D-fructose + phosphate. The enzyme catalyses glycerol 2-phosphate + H2O = glycerol + phosphate. It catalyses the reaction adenosine 2'-phosphate + H2O = adenosine + phosphate. It participates in polyol metabolism; myo-inositol biosynthesis; myo-inositol from D-glucose 6-phosphate: step 2/2. With respect to regulation, inhibited by Li(+), Ca(2+) and Mn(2+), but also by Mg(2+) at concentrations above 3 mM. Functionally, phosphatase involved in the dephosphorylation of myo-inositol monophosphate to generate myo-inositol. Is also able to dephosphorylate scyllo-inositol-phosphate, myo-inositol 1,4-diphosphate, scyllo-inositol-1,3-diphosphate and scyllo-inositol-1,4-diphosphate. Also dephosphorylates in vitro other sugar-phosphates including D-galactose-1-phosphate, glucose-1-phosphate, glucose-6-phosphate, fructose-1-phosphate, beta-glycerophosphate and 2'-AMP. Responsible for the provision of inositol required for synthesis of phosphatidylinositol and polyphosphoinositides, and involved in maintaining normal brain function. Has been implicated as the pharmacological target for lithium Li(+) action in brain. The protein is Inositol monophosphatase 1 (Impa1) of Mus musculus (Mouse).